The following is a 252-amino-acid chain: Transcriptional regulatory protein HptR (252 aa).

In terms of domain architecture, Response regulatory spans Lys3 to Val118. Asp55 bears the 4-aspartylphosphate mark. In terms of domain architecture, HTH araC/xylS-type spans Asn153–Gln250. DNA-binding regions (H-T-H motif) lie at residues Ser170–Val191 and His217–Leu240.

In terms of processing, phosphorylated by HptS.

The protein localises to the cytoplasm. Member of the two-component regulatory system HptS/HptR that regulates genes involved in hexose phosphate transport system in response to changes in extracellular phosphate sources. Activates uhpT expression to facilitate glucose-6-phosphate/G6P utilization by directly binding to its promoter. Antagonizes CcpA-dependent transcription of a subset of CcpA-regulated genes involved in antibiotic susceptibility. In Staphylococcus aureus (strain bovine RF122 / ET3-1), this protein is Transcriptional regulatory protein HptR (hptR).